Reading from the N-terminus, the 282-residue chain is Bifunctional protein FolD (282 aa).

Residues 165–167 (GRG), Thr-192, and Val-233 each bind NADP(+).

This sequence belongs to the tetrahydrofolate dehydrogenase/cyclohydrolase family. As to quaternary structure, homodimer.

The enzyme catalyses (6R)-5,10-methylene-5,6,7,8-tetrahydrofolate + NADP(+) = (6R)-5,10-methenyltetrahydrofolate + NADPH. It catalyses the reaction (6R)-5,10-methenyltetrahydrofolate + H2O = (6R)-10-formyltetrahydrofolate + H(+). The protein operates within one-carbon metabolism; tetrahydrofolate interconversion. Functionally, catalyzes the oxidation of 5,10-methylenetetrahydrofolate to 5,10-methenyltetrahydrofolate and then the hydrolysis of 5,10-methenyltetrahydrofolate to 10-formyltetrahydrofolate. This is Bifunctional protein FolD from Mycobacterium leprae (strain Br4923).